The chain runs to 557 residues: Membrane protein insertase YidC (557 aa).

3 helical membrane passes run 371-391 (WGWS…PLSA), 437-457 (LGGC…YWVL), and 515-535 (PIVF…YWVV).

Belongs to the OXA1/ALB3/YidC family. Type 1 subfamily. In terms of assembly, interacts with the Sec translocase complex via SecD. Specifically interacts with transmembrane segments of nascent integral membrane proteins during membrane integration.

It is found in the cell inner membrane. Its function is as follows. Required for the insertion and/or proper folding and/or complex formation of integral membrane proteins into the membrane. Involved in integration of membrane proteins that insert both dependently and independently of the Sec translocase complex, as well as at least some lipoproteins. Aids folding of multispanning membrane proteins. This Polynucleobacter necessarius subsp. necessarius (strain STIR1) protein is Membrane protein insertase YidC.